The primary structure comprises 79 residues: U-myrmeciitoxin(01)-Mg9a (79 aa).

The N-terminal stretch at 1–21 is a signal peptide; the sequence is MKLSCLLLTLAIIFVLTIVHA. A propeptide spanning residues 22–48 is cleaved from the precursor; the sequence is PNVEAKALANPESDAIGFADAVGEADP. A Glutamine amide modification is found at Gln78.

Expressed by the venom gland.

It localises to the secreted. Functionally, may have antimicrobial properties, like most ant linear peptides. The protein is U-myrmeciitoxin(01)-Mg9a of Myrmecia gulosa (Red bulldog ant).